Here is a 272-residue protein sequence, read N- to C-terminus: Transformer-2 sex-determining protein (272 aa).

2 disordered regions span residues 21 to 102 and 182 to 272; these read KHKC…DHPQ and ITQR…QSRY. A compositionally biased stretch (low complexity) spans 26-41; that stretch reads HSSATSSPSSAASSES. The span at 87–102 shows a compositional bias: basic and acidic residues; that stretch reads TSRDRQRMRQARDHPQ. Residues 105–183 form the RRM domain; sequence RCIGVFGLNT…RRIRVDYSIT (79 aa). The linker stretch occupies residues 184–204; that stretch reads QRAHTPTPGVYMGRPSRPLGR. Residues 205 to 218 show a composition bias toward basic and acidic residues; sequence RSRERDYSTRDTSR. Positions 238 to 266 are enriched in basic residues; that stretch reads RKYRSRHRYDRSRSRTRSYSRSRSPRKPV.

The protein belongs to the splicing factor SR family. In terms of processing, extensively phosphorylated on serine residues in the RS domain.

Required for female sex determination in somatic cells and for spermatogenesis in male germ cells. Positive regulator of female-specific splicing and/or polyadenylation of doublesex (dsx) pre-mRNA. Splicing requires an enhancer complex, dsxRE (dsx repeat element: which contains six copies of a 13-nucleotide repeat and a purine-rich enhancer (PRE)). DsxRE is formed through cooperative interactions between tra, tra2 and the sr proteins, and these interactions require both the repeat sequences and PRE. PRE is required for specific binding of tra2 to the dsxRE. Protein-RNA and protein-protein interactions are involved in tra-2 dependent activation and repression of alternative splicing. In Drosophila virilis (Fruit fly), this protein is Transformer-2 sex-determining protein (tra2).